Consider the following 562-residue polypeptide: Arginine--tRNA ligase (562 aa).

A 'HIGH' region motif is present at residues 129-139; the sequence is ANPTGPLHVGH.

Belongs to the class-I aminoacyl-tRNA synthetase family. Monomer.

Its subcellular location is the cytoplasm. It carries out the reaction tRNA(Arg) + L-arginine + ATP = L-arginyl-tRNA(Arg) + AMP + diphosphate. The chain is Arginine--tRNA ligase from Xylella fastidiosa (strain M12).